The primary structure comprises 38 residues: L-amino-acid oxidase (38 aa).

Belongs to the flavin monoamine oxidase family. FIG1 subfamily. In terms of assembly, homodimer; non-covalently linked. FAD serves as cofactor. N-glycosylated. Expressed by the venom gland.

The protein resides in the secreted. It catalyses the reaction an L-alpha-amino acid + O2 + H2O = a 2-oxocarboxylate + H2O2 + NH4(+). It carries out the reaction L-leucine + O2 + H2O = 4-methyl-2-oxopentanoate + H2O2 + NH4(+). The enzyme catalyses L-phenylalanine + O2 + H2O = 3-phenylpyruvate + H2O2 + NH4(+). The catalysed reaction is L-tryptophan + O2 + H2O = indole-3-pyruvate + H2O2 + NH4(+). It catalyses the reaction L-methionine + O2 + H2O = 4-methylsulfanyl-2-oxobutanoate + H2O2 + NH4(+). It carries out the reaction L-arginine + O2 + H2O = 5-guanidino-2-oxopentanoate + H2O2 + NH4(+). The enzyme catalyses L-2-aminohexanoate + O2 + H2O = 2-oxohexanoate + H2O2 + NH4(+). The catalysed reaction is L-2-aminopentanoate + O2 + H2O = 2-oxopentanoate + H2O2 + NH4(+). It catalyses the reaction L-tyrosine + O2 + H2O = 3-(4-hydroxyphenyl)pyruvate + H2O2 + NH4(+). Catalyzes an oxidative deamination of predominantly hydrophobic and aromatic L-amino acids, thus producing hydrogen peroxide that may contribute to the diverse toxic effects of this enzyme. Is very active against L-Phe and L-Tyr, moderately active against L-Trp, L-Met, L-Leu, L-norleucine (L-2-aminohexanoate), L-Arg and L-norvaline (L-2-aminopentanoate), and slightly active against L-His, L-cystine, and L-Ile. L-Gln, L-Lys, L-Asn, L-ornithine, L-Ala and L-Val are oxidized very slowly. Exhibits diverse biological activities, such as hemorrhage, hemolysis, edema, apoptosis of vascular endothelial cells or tumor cell lines, antibacterial and antiparasitic activities. This protein inhibits both agonist- and shear stress-induced platelet aggregation (SIPA). Effects of snake L-amino oxidases on platelets are controversial, since they either induce aggregation or inhibit agonist-induced aggregation. These different effects are probably due to different experimental conditions. This Naja kaouthia (Monocled cobra) protein is L-amino-acid oxidase.